The following is a 567-amino-acid chain: UPF0313 protein TM_0337 (567 aa).

The Radical SAM core domain maps to 288–560 (KAIETVKFSI…NKMKENVLFK (273 aa)). [4Fe-4S] cluster-binding residues include Cys-303, Cys-307, and Cys-310.

Belongs to the UPF0313 family. The cofactor is [4Fe-4S] cluster.

The sequence is that of UPF0313 protein TM_0337 from Thermotoga maritima (strain ATCC 43589 / DSM 3109 / JCM 10099 / NBRC 100826 / MSB8).